The sequence spans 211 residues: Small ribosomal subunit protein uS5 (211 aa).

The 64-residue stretch at 58 to 121 (FEERIVKLKR…KKAHNSIHTV (64 aa)) folds into the S5 DRBM domain.

This sequence belongs to the universal ribosomal protein uS5 family. In terms of assembly, part of the 30S ribosomal subunit. Contacts proteins S4 and S8.

Functionally, with S4 and S12 plays an important role in translational accuracy. Located at the back of the 30S subunit body where it stabilizes the conformation of the head with respect to the body. In Mycoplasma genitalium (strain ATCC 33530 / DSM 19775 / NCTC 10195 / G37) (Mycoplasmoides genitalium), this protein is Small ribosomal subunit protein uS5.